Reading from the N-terminus, the 315-residue chain is Glutaminase (315 aa).

Residues serine 70, asparagine 120, glutamate 166, asparagine 173, tyrosine 197, tyrosine 249, and valine 267 each contribute to the substrate site.

This sequence belongs to the glutaminase family. In terms of assembly, homotetramer.

It carries out the reaction L-glutamine + H2O = L-glutamate + NH4(+). In Rhizobium meliloti (strain 1021) (Ensifer meliloti), this protein is Glutaminase.